A 216-amino-acid chain; its full sequence is Serine acetyltransferase (216 aa).

The protein belongs to the transferase hexapeptide repeat family.

It is found in the cytoplasm. The catalysed reaction is L-serine + acetyl-CoA = O-acetyl-L-serine + CoA. It functions in the pathway amino-acid biosynthesis; L-cysteine biosynthesis; L-cysteine from L-serine: step 1/2. With respect to regulation, inhibited by cysteine. Its function is as follows. Catalyzes the acetylation of serine by acetyl-CoA to produce O-acetylserine (OAS). In Bacillus licheniformis (strain ATCC 14580 / DSM 13 / JCM 2505 / CCUG 7422 / NBRC 12200 / NCIMB 9375 / NCTC 10341 / NRRL NRS-1264 / Gibson 46), this protein is Serine acetyltransferase.